We begin with the raw amino-acid sequence, 342 residues long: tRNA-specific 2-thiouridylase MnmA (342 aa).

ATP contacts are provided by residues 6–13 (LLSGGVDS) and leucine 32. The active-site Nucleophile is cysteine 92. Cysteine 92 and cysteine 191 are oxidised to a cystine. Glycine 116 contacts ATP. Residues 138-140 (KDQ) are interaction with tRNA. Cysteine 191 functions as the Cysteine persulfide intermediate in the catalytic mechanism. The segment at 293 to 294 (RY) is interaction with tRNA.

It belongs to the MnmA/TRMU family.

Its subcellular location is the cytoplasm. It carries out the reaction S-sulfanyl-L-cysteinyl-[protein] + uridine(34) in tRNA + AH2 + ATP = 2-thiouridine(34) in tRNA + L-cysteinyl-[protein] + A + AMP + diphosphate + H(+). Functionally, catalyzes the 2-thiolation of uridine at the wobble position (U34) of tRNA, leading to the formation of s(2)U34. The polypeptide is tRNA-specific 2-thiouridylase MnmA (Helicobacter acinonychis (strain Sheeba)).